We begin with the raw amino-acid sequence, 674 residues long: Translation factor GUF1, mitochondrial (674 aa).

A mitochondrion-targeting transit peptide spans 1–33 (MLRPWFCFRSCVSLLSNRRQYGFRYLATAEPSK). The tract at residues 32–51 (SKSEKPAKPVKPAKPMSVQE) is disordered. Positions 75-257 (QNYRNFSIVA…SIIKNIPAPV (183 aa)) constitute a tr-type G domain. GTP-binding positions include 84 to 91 (AHVDHGKS), 150 to 154 (DTPGH), and 204 to 207 (NKID).

It belongs to the TRAFAC class translation factor GTPase superfamily. Classic translation factor GTPase family. LepA subfamily.

The protein resides in the mitochondrion inner membrane. The enzyme catalyses GTP + H2O = GDP + phosphate + H(+). Promotes mitochondrial protein synthesis. May act as a fidelity factor of the translation reaction, by catalyzing a one-codon backward translocation of tRNAs on improperly translocated ribosomes. Binds to mitochondrial ribosomes in a GTP-dependent manner. This is Translation factor GUF1, mitochondrial from Lodderomyces elongisporus (strain ATCC 11503 / CBS 2605 / JCM 1781 / NBRC 1676 / NRRL YB-4239) (Yeast).